Here is a 95-residue protein sequence, read N- to C-terminus: Co-chaperonin GroES (95 aa).

It belongs to the GroES chaperonin family. In terms of assembly, heptamer of 7 subunits arranged in a ring. Interacts with the chaperonin GroEL.

It is found in the cytoplasm. Its function is as follows. Together with the chaperonin GroEL, plays an essential role in assisting protein folding. The GroEL-GroES system forms a nano-cage that allows encapsulation of the non-native substrate proteins and provides a physical environment optimized to promote and accelerate protein folding. GroES binds to the apical surface of the GroEL ring, thereby capping the opening of the GroEL channel. The polypeptide is Co-chaperonin GroES (Clostridium botulinum (strain ATCC 19397 / Type A)).